The primary structure comprises 986 residues: Isoleucine--tRNA ligase (986 aa).

Positions 534 to 538 match the 'KMSKS' region motif; that stretch reads EMHKS. Lysine 537 is a binding site for ATP.

The protein belongs to the class-I aminoacyl-tRNA synthetase family. IleS type 2 subfamily. Monomer. It depends on Zn(2+) as a cofactor.

The protein localises to the cytoplasm. It carries out the reaction tRNA(Ile) + L-isoleucine + ATP = L-isoleucyl-tRNA(Ile) + AMP + diphosphate. Functionally, catalyzes the attachment of isoleucine to tRNA(Ile). As IleRS can inadvertently accommodate and process structurally similar amino acids such as valine, to avoid such errors it has two additional distinct tRNA(Ile)-dependent editing activities. One activity is designated as 'pretransfer' editing and involves the hydrolysis of activated Val-AMP. The other activity is designated 'posttransfer' editing and involves deacylation of mischarged Val-tRNA(Ile). The polypeptide is Isoleucine--tRNA ligase (ileS) (Saccharolobus solfataricus (strain ATCC 35092 / DSM 1617 / JCM 11322 / P2) (Sulfolobus solfataricus)).